Reading from the N-terminus, the 642-residue chain is Threonine--tRNA ligase (642 aa).

The TGS domain occupies 1 to 61 (MPVITLPDGS…ENDAQLSIIT (61 aa)). A catalytic region spans residues 243–534 (DHRKIGKQLD…LTEEFAGFFP (292 aa)). The Zn(2+) site is built by cysteine 334, histidine 385, and histidine 511.

Belongs to the class-II aminoacyl-tRNA synthetase family. As to quaternary structure, homodimer. Requires Zn(2+) as cofactor.

Its subcellular location is the cytoplasm. The catalysed reaction is tRNA(Thr) + L-threonine + ATP = L-threonyl-tRNA(Thr) + AMP + diphosphate + H(+). Its function is as follows. Catalyzes the attachment of threonine to tRNA(Thr) in a two-step reaction: L-threonine is first activated by ATP to form Thr-AMP and then transferred to the acceptor end of tRNA(Thr). Also edits incorrectly charged L-seryl-tRNA(Thr). This is Threonine--tRNA ligase from Enterobacter sp. (strain 638).